Consider the following 1187-residue polypeptide: ATP-dependent DNA helicase MER3 (1187 aa).

The segment at 1–41 is disordered; that stretch reads MKTKFDRLGTGKRSRPSPNNIDFNDQSATFKRNKKNSRQPS. Polar residues predominate over residues 16-30; sequence PSPNNIDFNDQSATF. One can recognise a Helicase ATP-binding domain in the interval 148–322; the sequence is PSIYESNENC…WLKTNNELPA (175 aa). ATP is bound at residue 161 to 168; sequence SPTGSGKT. The DEIH box motif lies at 268-271; that stretch reads DEIH. The 183-residue stretch at 360–542 folds into the Helicase C-terminal domain; it reads KLIEIIEKHA…NLIEHLAAET (183 aa). Positions 616–922 constitute an SEC63 domain; the sequence is STAYGNAMTR…PKLEKIEFSI (307 aa). The C4-type zinc finger occupies 1039-1054; the sequence is CFHSCKDKTQCRHLCC. The disordered stretch occupies residues 1146–1187; it reads NCPEIIPIDLESSDSYSSNTAASSISDPNGDLDFLGSDIEFE. Low complexity predominate over residues 1158–1171; sequence SDSYSSNTAASSIS.

This sequence belongs to the helicase family. SKI2 subfamily. As to quaternary structure, oligomerizes. A divalent metal cation is required as a cofactor. Zn(2+) serves as cofactor.

The protein localises to the nucleus. The enzyme catalyses Couples ATP hydrolysis with the unwinding of duplex DNA by translocating in the 3'-5' direction.. It carries out the reaction ATP + H2O = ADP + phosphate + H(+). DNA-dependent ATPase and 3'-5' DNA helicase. Required in the control of double strand break transition and crossover during meiosis. ATPase is slightly better stimulated by single-stranded (ss) than double-stranded (ds)DNA. Unwinds Holliday junction (HJ) DNA to Y-DNA and to ssDNA. Efficient unwinding requires 6 nucleotides of 3'-ssDNA; seems to initiate unwinding from blunt ends when they open slightly. Binds HJ, dsDNA, ssDNA and 3'- and 5-overhang DNA. The chain is ATP-dependent DNA helicase MER3 from Saccharomyces cerevisiae (strain ATCC 204508 / S288c) (Baker's yeast).